Reading from the N-terminus, the 718-residue chain is Exostosin-2 (718 aa).

Over 1 to 25 the chain is Cytoplasmic; it reads MCASVKYNIRGPALIPRMKTKHRIY. The chain crosses the membrane as a helical; Signal-anchor for type II membrane protein span at residues 26-46; it reads YITLFSIVLLGLIATGMFQFW. Residues 47–718 are Lumenal-facing; that stretch reads PHSIESSGDW…LKSFPNIGSL (672 aa). Cystine bridges form between C85/C90, C96/C151, C286/C300, and C318/C339. N288 is a glycosylation site (N-linked (GlcNAc...) asparagine). UDP contacts are provided by L461, R465, N490, and N517. Residues R465, N490, N517, R522, D538, D539, and D540 each contribute to the UDP-N-acetyl-alpha-D-glucosamine site. Positions 538 and 539 each coordinate UDP. D540 is a Mn(2+) binding site. A protein-binding residues include Y582 and S584. A disulfide bond links C626 and C676. UDP-N-acetyl-alpha-D-glucosamine is bound by residues E627 and D628. N637 carries an N-linked (GlcNAc...) asparagine glycan. Residues K651 and K653 each contribute to the a protein site. Residue R673 coordinates UDP-N-acetyl-alpha-D-glucosamine.

The protein belongs to the glycosyltransferase 47 family. As to quaternary structure, part of the heparan sulfate polymerase, a dimeric complex composed of EXT1 and EXT2. Could also form homooligomeric complexes. Interacts with NDST1. Interacts with GALNT5. Mn(2+) serves as cofactor. In terms of processing, a soluble form is generated by proteolytic processing. Post-translationally, N-glycosylated at Asn-637.

The protein localises to the golgi apparatus membrane. It localises to the golgi apparatus. It is found in the cis-Golgi network membrane. The protein resides in the endoplasmic reticulum membrane. Its subcellular location is the secreted. The catalysed reaction is 3-O-{[(1-&gt;4)-beta-D-GlcA-(1-&gt;4)-alpha-D-GlcNAc](n)-(1-&gt;4)-beta-D-GlcA-(1-&gt;3)-beta-D-Gal-(1-&gt;3)-beta-D-Gal-(1-&gt;4)-beta-D-Xyl}-L-seryl-[protein] + UDP-N-acetyl-alpha-D-glucosamine = 3-O-{alpha-D-GlcNAc-[(1-&gt;4)-beta-D-GlcA-(1-&gt;4)-alpha-D-GlcNAc](n)-(1-&gt;4)-beta-D-GlcA-(1-&gt;3)-beta-D-Gal-(1-&gt;3)-beta-D-Gal-(1-&gt;4)-beta-D-Xyl}-L-seryl-[protein] + UDP + H(+). Its pathway is protein modification; protein glycosylation. Its function is as follows. Glycosyltransferase forming with EXT1 the heterodimeric heparan sulfate polymerase which catalyzes the elongation of the heparan sulfate glycan backbone. Glycan backbone extension consists in the alternating transfer of (1-&gt;4)-beta-D-GlcA and (1-&gt;4)-alpha-D-GlcNAc residues from their respective UDP-sugar donors. Both EXT1 and EXT2 are required for the full activity of the polymerase since EXT1 bears the N-acetylglucosaminyl-proteoglycan 4-beta-glucuronosyltransferase activity within the complex while EXT2 carries the glucuronosyl-N-acetylglucosaminyl-proteoglycan 4-alpha-N-acetylglucosaminyltransferase activity. Heparan sulfate proteoglycans are ubiquitous components of the extracellular matrix and play an important role in tissue homeostasis and signaling. In Bos taurus (Bovine), this protein is Exostosin-2.